The primary structure comprises 430 residues: Serine--tRNA ligase (430 aa).

Residue 237–239 coordinates L-serine; that stretch reads TAE. 268–270 is an ATP binding site; it reads RSE. Glu291 provides a ligand contact to L-serine. 355–358 contributes to the ATP binding site; sequence EISS. Ser391 is an L-serine binding site.

Belongs to the class-II aminoacyl-tRNA synthetase family. Type-1 seryl-tRNA synthetase subfamily. As to quaternary structure, homodimer. The tRNA molecule binds across the dimer.

It localises to the cytoplasm. The catalysed reaction is tRNA(Ser) + L-serine + ATP = L-seryl-tRNA(Ser) + AMP + diphosphate + H(+). The enzyme catalyses tRNA(Sec) + L-serine + ATP = L-seryl-tRNA(Sec) + AMP + diphosphate + H(+). The protein operates within aminoacyl-tRNA biosynthesis; selenocysteinyl-tRNA(Sec) biosynthesis; L-seryl-tRNA(Sec) from L-serine and tRNA(Sec): step 1/1. In terms of biological role, catalyzes the attachment of serine to tRNA(Ser). Is also able to aminoacylate tRNA(Sec) with serine, to form the misacylated tRNA L-seryl-tRNA(Sec), which will be further converted into selenocysteinyl-tRNA(Sec). This is Serine--tRNA ligase from Cronobacter sakazakii (strain ATCC BAA-894) (Enterobacter sakazakii).